Consider the following 448-residue polypeptide: Maintenance of mitochondrial morphology protein 1 (448 aa).

Residues 1–74 are Lumenal-facing; that stretch reads MTESVIYSGT…LNHTWSFTQG (74 aa). Residues 75–95 form a helical membrane-spanning segment; the sequence is LVVGQLSVIVVVAIFIKFFVF. The Cytoplasmic segment spans residues 96-448; that stretch reads ADSSATTTTT…IVDKTEEASI (353 aa). 2 disordered regions span residues 119 to 144 and 303 to 357; these read RNKN…LNSP and LQNV…SQED. Residues 127–140 show a composition bias toward basic and acidic residues; the sequence is SNEDKDPNNNKEDD. Positions 164-419 constitute an SMP-LTD domain; sequence SPESLDWFNV…EPRFQVVKVP (256 aa). Low complexity predominate over residues 313 to 332; that stretch reads PSNEPNSQNQTQQPTPVNNS. Residues 345-356 are compositionally biased toward basic and acidic residues; the sequence is ETKHSKAKRSQE.

Belongs to the MMM1 family. Homodimer. Component of the ER-mitochondria encounter structure (ERMES) or MDM complex, composed of MMM1, MDM10, MDM12 and MDM34. An MMM1 homodimer associates with one molecule of MDM12 on each side in a pairwise head-to-tail manner, and the SMP-LTD domains of MMM1 and MDM12 generate a continuous hydrophobic tunnel for phospholipid trafficking.

Its subcellular location is the endoplasmic reticulum membrane. Component of the ERMES/MDM complex, which serves as a molecular tether to connect the endoplasmic reticulum (ER) and mitochondria. Components of this complex are involved in the control of mitochondrial shape and protein biogenesis, and function in nonvesicular lipid trafficking between the ER and mitochondria. The MDM12-MMM1 subcomplex functions in the major beta-barrel assembly pathway that is responsible for biogenesis of all outer membrane beta-barrel proteins, and acts in a late step after the SAM complex. The MDM10-MDM12-MMM1 subcomplex further acts in the TOM40-specific pathway after the action of the MDM12-MMM1 complex. Essential for establishing and maintaining the structure of mitochondria and maintenance of mtDNA nucleoids. This is Maintenance of mitochondrial morphology protein 1 from Debaryomyces hansenii (strain ATCC 36239 / CBS 767 / BCRC 21394 / JCM 1990 / NBRC 0083 / IGC 2968) (Yeast).